The sequence spans 129 residues: Ribonuclease P protein component (129 aa).

This sequence belongs to the RnpA family. Consists of a catalytic RNA component (M1 or rnpB) and a protein subunit.

The enzyme catalyses Endonucleolytic cleavage of RNA, removing 5'-extranucleotides from tRNA precursor.. RNaseP catalyzes the removal of the 5'-leader sequence from pre-tRNA to produce the mature 5'-terminus. It can also cleave other RNA substrates such as 4.5S RNA. The protein component plays an auxiliary but essential role in vivo by binding to the 5'-leader sequence and broadening the substrate specificity of the ribozyme. This is Ribonuclease P protein component from Prochlorococcus marinus (strain MIT 9515).